The following is a 456-amino-acid chain: MDKRFAVVLAAGQGTRMKSKLYKVLHPVCGKPMVEHVVDEARKLSLEKLVTIVGHGAEDVKKQLGEKSEYALQAEQLGTAHAVKQAKSILGSEKGTTIVICGDTPLLTAETMEAMLTEHQKKAAKVTILTAVAEDPTGYGRIIRNENGDVAKIVEHKDATEEERLVKEINTGTYCFDNEALFQTIEQVSNDNVQGEYYLPDVIEILKNQGETVAAYQTVNFQETLGVNDRVALSQAEIYMKQRINKRHMQNGVSLIDPDNTYISPEAVIGRDTVIYPGTVIKGRVVIGEDAVIGQNSELENSTVGSRTVIKQSVIVDSEVGDDVTIGPFAHIRPDSKIGNEVRIGNFVEVKKSEFGDRSKASHLSYIGDAEIGTDVNLGCGSITVNYDGKHKFKTKIENGAFIGCNSNLVAPVTIGEGAYVAAGSTITDDVPGRALSIARARQVNKEDYAENIHKK.

The interval M1–R230 is pyrophosphorylase. UDP-N-acetyl-alpha-D-glucosamine is bound by residues L9–G12, K23, Q73, and G78–T79. Mg(2+) is bound at residue D103. G140, E155, N170, and N228 together coordinate UDP-N-acetyl-alpha-D-glucosamine. Position 228 (N228) interacts with Mg(2+). The interval V231–N251 is linker. Residues G252–K456 are N-acetyltransferase. 2 residues coordinate UDP-N-acetyl-alpha-D-glucosamine: R333 and K351. The Proton acceptor role is filled by H363. UDP-N-acetyl-alpha-D-glucosamine-binding residues include Y366 and N377. Residues N386–Y387, A423, and R440 contribute to the acetyl-CoA site.

The protein in the N-terminal section; belongs to the N-acetylglucosamine-1-phosphate uridyltransferase family. This sequence in the C-terminal section; belongs to the transferase hexapeptide repeat family. As to quaternary structure, homotrimer. Mg(2+) serves as cofactor.

It localises to the cytoplasm. It catalyses the reaction alpha-D-glucosamine 1-phosphate + acetyl-CoA = N-acetyl-alpha-D-glucosamine 1-phosphate + CoA + H(+). The enzyme catalyses N-acetyl-alpha-D-glucosamine 1-phosphate + UTP + H(+) = UDP-N-acetyl-alpha-D-glucosamine + diphosphate. The protein operates within nucleotide-sugar biosynthesis; UDP-N-acetyl-alpha-D-glucosamine biosynthesis; N-acetyl-alpha-D-glucosamine 1-phosphate from alpha-D-glucosamine 6-phosphate (route II): step 2/2. It participates in nucleotide-sugar biosynthesis; UDP-N-acetyl-alpha-D-glucosamine biosynthesis; UDP-N-acetyl-alpha-D-glucosamine from N-acetyl-alpha-D-glucosamine 1-phosphate: step 1/1. Its pathway is bacterial outer membrane biogenesis; LPS lipid A biosynthesis. Its function is as follows. Catalyzes the last two sequential reactions in the de novo biosynthetic pathway for UDP-N-acetylglucosamine (UDP-GlcNAc). The C-terminal domain catalyzes the transfer of acetyl group from acetyl coenzyme A to glucosamine-1-phosphate (GlcN-1-P) to produce N-acetylglucosamine-1-phosphate (GlcNAc-1-P), which is converted into UDP-GlcNAc by the transfer of uridine 5-monophosphate (from uridine 5-triphosphate), a reaction catalyzed by the N-terminal domain. The polypeptide is Bifunctional protein GlmU (Bacillus licheniformis (strain ATCC 14580 / DSM 13 / JCM 2505 / CCUG 7422 / NBRC 12200 / NCIMB 9375 / NCTC 10341 / NRRL NRS-1264 / Gibson 46)).